The primary structure comprises 497 residues: Zinc finger protein 3 (497 aa).

Residues 1–20 (MGTEKKEGLPKEETSEDSKP) are compositionally biased toward basic and acidic residues. The tract at residues 1-53 (MGTEKKEGLPKEETSEDSKPHGQTVEKLAQEVCHGHEFGEASEEDMSEGHLRE) is disordered. Residues lysine 6 and lysine 11 each participate in a glycyl lysine isopeptide (Lys-Gly) (interchain with G-Cter in SUMO2) cross-link. 13 C2H2-type zinc fingers span residues 136–158 (HTCK…MRVH), 164–186 (FECK…QRIH), 192–214 (FACT…HRIH), 220–242 (YKCE…QRIH), 248–270 (YECN…QRIH), 276–298 (HECS…QKIH), 304–326 (YLCN…QRIH), 332–354 (YECS…IRIH), 360–382 (YVCK…ERIH), 388–410 (YECF…QRIH), 416–438 (HQCN…QKIH), 444–466 (YECS…QRIH), and 472–494 (YECQ…QSVH).

Belongs to the krueppel C2H2-type zinc-finger protein family.

It localises to the nucleus. In terms of biological role, may be involved in transcriptional regulation. The sequence is that of Zinc finger protein 3 (Zfp3) from Mus musculus (Mouse).